The chain runs to 331 residues: Cilia- and flagella-associated protein 119 (331 aa).

The residue at position 34 (Ser34) is a Phosphoserine. 2 disordered regions span residues Leu236 to Glu271 and Ser309 to Lys331. Residues Val286 to Arg317 adopt a coiled-coil conformation.

The protein localises to the cell projection. Its subcellular location is the cilium. It is found in the flagellum. It localises to the cytoplasmic vesicle. The protein resides in the secretory vesicle. The protein localises to the acrosome. Its subcellular location is the cytoplasm. The protein is Cilia- and flagella-associated protein 119 of Homo sapiens (Human).